Reading from the N-terminus, the 138-residue chain is MVMTVRVIAPDKTVWDAPAEEVILPSTTGQLGILSNHAPLLTALETGVMRVRQEREWVAIALMGGFAEVENNEVTVLVNAAERGDTIDLETAKREFSEAQAAVAKAAQSGSKQAQIQAAQAFRRARARLQAAGGVVEI.

Belongs to the ATPase epsilon chain family. In terms of assembly, F-type ATPases have 2 components, CF(1) - the catalytic core - and CF(0) - the membrane proton channel. CF(1) has five subunits: alpha(3), beta(3), gamma(1), delta(1), epsilon(1). CF(0) has three main subunits: a, b and c.

The protein resides in the cellular thylakoid membrane. Produces ATP from ADP in the presence of a proton gradient across the membrane. The protein is ATP synthase epsilon chain (atpC) of Synechococcus sp. (strain PCC 6716).